Consider the following 232-residue polypeptide: Ion-translocating oxidoreductase complex subunit E (232 aa).

5 helical membrane passes run 39–59, 69–89, 93–113, 128–148, and 182–202; these read LGLG…ISLV, IPVF…LVNA, GLYM…IIIG, AFDG…LGAT, and SFLL…LIAL.

This sequence belongs to the NqrDE/RnfAE family. As to quaternary structure, the complex is composed of six subunits: RnfA, RnfB, RnfC, RnfD, RnfE and RnfG.

Its subcellular location is the cell inner membrane. Functionally, part of a membrane-bound complex that couples electron transfer with translocation of ions across the membrane. The protein is Ion-translocating oxidoreductase complex subunit E of Shewanella oneidensis (strain ATCC 700550 / JCM 31522 / CIP 106686 / LMG 19005 / NCIMB 14063 / MR-1).